A 516-amino-acid chain; its full sequence is Potassium voltage-gated channel subfamily A member 10 (516 aa).

A helical transmembrane segment spans residues 223-244 (VALVSVLVIVISIIIFCMETLP). The N-linked (GlcNAc...) asparagine glycan is linked to Asn-261. A helical transmembrane segment spans residues 276–296 (FFVIETACIIWFSFELFVRFI). Residues 308-328 (IMNIIDIVSIIPYFVTLTTEL) traverse the membrane as a helical segment. N-linked (GlcNAc...) asparagine glycosylation is present at Asn-339. A helical; Voltage-sensor transmembrane segment spans residues 344-363 (ILRIIRLVRVFRIFKLSRHS). The helical transmembrane segment at 380-400 (LGLLIFFLFIGVILFSSAVYF) threads the bilayer. The Selectivity filter motif lies at 426-431 (TVGYGD). Residues 441–461 (IVGTLCAIAGVLTIALPVPVI) form a helical membrane-spanning segment. Residue Asn-503 is glycosylated (N-linked (GlcNAc...) asparagine).

This sequence belongs to the potassium channel family. A (Shaker) (TC 1.A.1.2) subfamily. Kv1.8/KCNA10 sub-subfamily. In terms of assembly, homotetramer. As to expression, detected in brain, cochlear sensory epithelium, cochlear ganglion, tegumentum vasculosum. Detected at low levels in cochlear lagena.

It is found in the membrane. The enzyme catalyses K(+)(in) = K(+)(out). With respect to regulation, the channel activity is up-regulated by cAMP. In terms of biological role, voltage-gated potassium ion channel that mediates K(+) permeability of excitable membranes. When opened in response to the voltage difference across the membrane, KCNA10 channel selectively allows the flow of potassium ions across the membrane down their electrochemical gradient. This is Potassium voltage-gated channel subfamily A member 10 (KCNA10) from Gallus gallus (Chicken).